The chain runs to 278 residues: E3 ubiquitin-protein ligase CHIP (278 aa).

TPR repeat units lie at residues Ala10–Val43, Ala45–Ser77, and Val78–Ser111. Residues Glu143–Glu194 are a coiled coil. Residues Glu199 to Ala273 form the U-box domain.

As to quaternary structure, interacts with HSC70-4, PP2AA1, PP2AA3 and PP2A5, as well as with UBC8, UBC9 and UBC10. Also interacts with the chloroplastic proteolytic subunits ClpP4, FtsH1 and FtsH2.

The catalysed reaction is S-ubiquitinyl-[E2 ubiquitin-conjugating enzyme]-L-cysteine + [acceptor protein]-L-lysine = [E2 ubiquitin-conjugating enzyme]-L-cysteine + N(6)-ubiquitinyl-[acceptor protein]-L-lysine.. It participates in protein modification; protein ubiquitination. In terms of biological role, has E3 ubiquitin-protein ligase activity and may target misfolded substrates towards proteasomal degradation. Regulates the activity of some serine/threonine-protein phosphatases by E3 ubiquitin-protein ligase activity. Required for responses to biotic and abiotic stresses such as auxin, abscisic acid (ABA), low and high temperature and darkness, probably through the activation of serine/threonine-protein phosphatase and the subsequent modification of the plasma membrane composition. Regulates the chloroplastic Clp proteolytic activity in response to stresses. Ubiquitylates FtsH1, a component of the chloroplast FtsH protease, and affects protein degradation in chloroplasts. Mediates plastid precursor degradation to prevent cytosolic precursor accumulation, together with the molecular chaperone HSC70-4. Mediates ubiquitination of transit peptides and thereby led to their degradation through the ubiquitin-proteasome system. The polypeptide is E3 ubiquitin-protein ligase CHIP (Arabidopsis thaliana (Mouse-ear cress)).